The following is a 418-amino-acid chain: Secernin-3 (418 aa).

Residues Met-1–Ser-5 constitute a propeptide that is removed on maturation. The active site involves Cys-6. Residue Cys-6 is modified to Glyoxylic acid (Cys); alternate. Pyruvic acid (Cys); alternate is present on Cys-6.

Belongs to the peptidase C69 family. Secernin subfamily.

Functionally, plays a role in thermal nociception. The protein is Secernin-3 (Scrn3) of Mus musculus (Mouse).